A 1181-amino-acid chain; its full sequence is Integrin alpha-7 (1181 aa).

The first 33 residues, 1–33 (MAGARSRDPWGASGICYLFGSLLVELLFSRAVA), serve as a signal peptide directing secretion. The Extracellular portion of the chain corresponds to 34–1082 (FNLDVMGALR…MAVVAEGVPW (1049 aa)). FG-GAP repeat units lie at residues 35-103 (NLDV…ETDC), 110-175 (QGAD…IRDE), 185-238 (EGRP…SADL), 292-349 (DRLP…ASRL), 350-411 (VPEV…HWAG), 412-467 (ISPL…GVVA), and 471-530 (QVLE…IAPR). Asn86 carries an N-linked (GlcNAc...) asparagine glycan. Disulfide bonds link Cys94–Cys103, Cys140–Cys163, and Cys184–Cys197. Residues Asp372, Asn374, Asp376, Asp380, Asp434, Asn436, Asp438, Asp442, Asp492, Asp494, Asn496, Tyr498, and Asp500 each contribute to the Ca(2+) site. Disulfide bonds link Cys539-Cys546, Cys552-Cys615, Cys681-Cys687, Cys781-Cys792, Cys939-Cys994, and Cys1001-Cys1006. Asn786 carries an N-linked (GlcNAc...) asparagine glycan. The span at 950-961 (VDSRDRRRRELE) shows a compositional bias: basic and acidic residues. Residues 950-978 (VDSRDRRRRELEPPEQQEPGERQEPSMSW) are disordered. Residue Asn989 is glycosylated (N-linked (GlcNAc...) asparagine). N-linked (GlcNAc...) asparagine glycosylation is found at Asn1025 and Asn1045. The helical transmembrane segment at 1083–1103 (WVILLAVLAGLLVLALLVLLL) threads the bilayer. At 1104–1181 (WKMGFFKRAK…PDGHPGPGTA (78 aa)) the chain is on the cytoplasmic side. Positions 1107-1111 (GFFKR) match the GFFKR motif motif. Positions 1138-1181 (EKTGTILRNNWGSPRREGPDAHPILAADGHPELGPDGHPGPGTA) are disordered. Repeat copies occupy residues 1157–1160 (DAHP), 1165–1168 (DGHP), and 1173–1176 (DGHP). Residues 1157-1176 (DAHPILAADGHPELGPDGHP) are 3 X 4 AA repeats of D-X-H-P.

This sequence belongs to the integrin alpha chain family. As to quaternary structure, heterodimer of an alpha and a beta subunit. The alpha subunit is composed of a heavy and a light chain linked by a disulfide bond. Alpha-7 associates with beta-1. Interacts with COMP. Interacts (via C-terminus intracellular tail region) with CIB1; the interaction is stabilized/increased in a calcium- and magnesium-dependent manner. Post-translationally, ADP-ribosylated on at least two sites of the extracellular domain in skeletal myotubes. A 70 kDa form is created by proteolytic cleavage. Cleavage is elevated during myogenic differentiation and the cleaved form enhances cell adhesion and spreading on laminin. In terms of tissue distribution, isoforms containing segment A are predominantly expressed in skeletal muscle. Isoforms containing segment B are abundantly expressed in skeletal muscle, moderately in cardiac muscle, small intestine, colon, ovary and prostate and weakly in lung and testes. Isoforms containing segment X2D are expressed at low levels in fetal and adult skeletal muscle and in cardiac muscle, but are not detected in myoblasts and myotubes. In muscle fibers isoforms containing segment A and B are expressed at myotendinous and neuromuscular junctions; isoforms containing segment C are expressed at neuromuscular junctions and at extrasynaptic sites. Isoforms containing segments X1 or X2 or, at low levels, X1X2 are expressed in fetal and adult skeletal muscle (myoblasts and myotubes) and cardiac muscle.

The protein resides in the membrane. Functionally, integrin alpha-7/beta-1 is the primary laminin receptor on skeletal myoblasts and adult myofibers. During myogenic differentiation, it may induce changes in the shape and mobility of myoblasts, and facilitate their localization at laminin-rich sites of secondary fiber formation. It is involved in the maintenance of the myofibers cytoarchitecture as well as for their anchorage, viability and functional integrity. Isoform Alpha-7X2B and isoform Alpha-7X1B promote myoblast migration on laminin 1 and laminin 2/4, but isoform Alpha-7X1B is less active on laminin 1 (In vitro). Acts as a Schwann cell receptor for laminin-2. Acts as a receptor of COMP and mediates its effect on vascular smooth muscle cells (VSMCs) maturation. Required to promote contractile phenotype acquisition in differentiated airway smooth muscle (ASM) cells. The sequence is that of Integrin alpha-7 (ITGA7) from Homo sapiens (Human).